A 310-amino-acid chain; its full sequence is Solute carrier family 25 member 47 (310 aa).

3 Solcar repeats span residues 1 to 80 (MDFV…CLAH), 93 to 208 (PTKA…LCEW), and 217 to 304 (PDVL…VLRL). 6 helical membrane-spanning segments follow: residues 3–23 (FVAG…LDTV), 55–75 (GLSL…GTYH), 98–114 (ITLS…FLTS), 194–210 (SFAT…EWLT), 219–239 (VLGV…VATP), and 280–298 (LALN…FVAY).

It belongs to the mitochondrial carrier (TC 2.A.29) family. Specifically expressed in liver (at protein level).

Its subcellular location is the mitochondrion inner membrane. It is found in the mitochondrion outer membrane. It carries out the reaction NAD(+)(in) = NAD(+)(out). The catalysed reaction is acetyl-CoA(in) = acetyl-CoA(out). Its function is as follows. Mitochondrial NAD(+) transporter that acts as a 'metabolic gate' in hepatic lipogenesis. Provides NAD(+) substrate to mitochondrial SIRT3 deacetylase and enables its NAD(+)-dependent activities in mitochondrial energy metabolism. This triggers downstream activation of PRKAA1/AMPK-alpha signaling cascade that negatively regulates sterol regulatory element-binding protein (SREBP) transcriptional activities and ATP-consuming lipogenesis to restore cellular energy balance. May transport other mitochondrial metabolites having an aromatic nucleotide and phosphate groups, such as acetyl-CoA. Does not transport amino acids. The transport mechanism remains to be elucidated. The chain is Solute carrier family 25 member 47 from Mus musculus (Mouse).